A 107-amino-acid polypeptide reads, in one-letter code: Antimicrobial peptide microplusin (107 aa).

The first 19 residues, 1-19 (MKSLLVCLVLAVVVLVASG), serve as a signal peptide directing secretion. 3 disulfide bridges follow: Cys25-Cys60, Cys38-Cys88, and Cys49-Cys54. The segment at 86-107 (TDCDHSHGHEHSHGHEHGHGHH) is disordered. The span at 87–107 (DCDHSHGHEHSHGHEHGHGHH) shows a compositional bias: basic and acidic residues.

The protein resides in the secreted. Functionally, has bacteriostatic activity against Gram-positive bacteria, but not against Gram-negative bacteria. Has fungistatic activity against some but not all fungi. Binds and sequesters copper and iron ions. Copper-chelating is crucial for antimicrobial activity against M.luteus. This Ixodes scapularis (Black-legged tick) protein is Antimicrobial peptide microplusin.